The chain runs to 162 residues: Anaerobic nitrite reductase (162 aa).

N-acetylserine is present on Ser2. The Globin domain occupies 9-158; sequence VFTEEQEALV…LVAAIKFEMK (150 aa). A Homodimerization motif is present at residues 42-46; the sequence is EIAPS. Heme b-binding residues include Ser52, Lys66, His70, Arg100, and His105. The short motif at 112–124 is the Homodimerization element; it reads NEHFEVTRFALLE.

This sequence belongs to the plant globin family. In terms of assembly, homodimer with distinct heme coordination in each subunits. It depends on heme b as a cofactor. As to expression, root nodules.

Its subcellular location is the cytoplasm. It localises to the nucleus. The enzyme catalyses Fe(III)-heme b-[protein] + nitric oxide + H2O = Fe(II)-heme b-[protein] + nitrite + 2 H(+). Phytoglobin that reduces nitrite to nitric oxide (NO) under anoxic conditions (e.g. during flooding or in waterlogged soil) and upon root nodulation. Required for general plant development and during nodulation, especially for the onset of symbiosis. Monitors nitric oxide (NO) levels during early phase of the nitrogen-fixing symbiosis and buffers oxygen in functioning nodules. May not function as an oxygen storage or transport protein. Has an unusually high affinity for O(2) through a hexacoordinate heme iron because of a very low dissociation constant. The polypeptide is Anaerobic nitrite reductase (Parasponia andersonii (Sponia andersonii)).